The primary structure comprises 68 residues: SLFELGKMILQETGKNPAKSYGAYGCNCGVLGRGKPKEATQRCCYVHKCCYKKLTGCDPKKDRYSYSW.

An intrachain disulfide couples C28 to C44.

Belongs to the phospholipase A2 family. Group II subfamily. K49 sub-subfamily. As to expression, expressed by the venom gland.

It is found in the secreted. In terms of biological role, snake venom phospholipase A2 (PLA2) that lacks enzymatic activity. Is myotoxic, induces edema, and causes systemic effects (renal changes that lead to proteinuria) on mice. A model of myotoxic mechanism has been proposed: an apo Lys49-PLA2 is activated by the entrance of a hydrophobic molecule (e.g. fatty acid) at the hydrophobic channel of the protein leading to a reorientation of a monomer. This reorientation causes a transition between 'inactive' to 'active' states, causing alignment of C-terminal and membrane-docking sites (MDoS) side-by-side and putting the membrane-disruption sites (MDiS) in the same plane, exposed to solvent and in a symmetric position for both monomers. The MDoS region stabilizes the toxin on membrane by the interaction of charged residues with phospholipid head groups. Subsequently, the MDiS region destabilizes the membrane with penetration of hydrophobic residues. This insertion causes a disorganization of the membrane, allowing an uncontrolled influx of ions (i.e. calcium and sodium), and eventually triggering irreversible intracellular alterations and cell death. This is Basic phospholipase A2 homolog BdipTx-I from Bothrops diporus (Chaco lancehead).